We begin with the raw amino-acid sequence, 101 residues long: Small ribosomal subunit protein uS14A (101 aa).

Disordered stretches follow at residues 1–21 and 49–73; these read MAKK…AHHA and QRLP…PRGT. Basic and acidic residues-rich tracts occupy residues 8–21 and 61–70; these read AKNE…AHHA and RNRDAADGRP.

This sequence belongs to the universal ribosomal protein uS14 family. Part of the 30S ribosomal subunit. Contacts proteins S3 and S10.

In terms of biological role, binds 16S rRNA, required for the assembly of 30S particles and may also be responsible for determining the conformation of the 16S rRNA at the A site. In Kineococcus radiotolerans (strain ATCC BAA-149 / DSM 14245 / SRS30216), this protein is Small ribosomal subunit protein uS14A.